We begin with the raw amino-acid sequence, 45 residues long: MPMATTIEGADYTNIMPITVLTTVYLGVSIGIDTSTTGFTCFSWY.

The protein belongs to the coronaviruses ns4/ns4.8 protein family.

This is Non-structural protein of 4.8 kDa from Bos taurus (Bovine).